Consider the following 185-residue polypeptide: Small ribosomal subunit protein uS4c (185 aa).

The S4 RNA-binding domain occupies 72–134 (MRLDNVIFRL…PTSCNALKGE (63 aa)). The interval 132 to 154 (KGESPGGGETPDHLTASLSEGSR) is disordered.

It belongs to the universal ribosomal protein uS4 family. Part of the 30S ribosomal subunit. Contacts protein S5. The interaction surface between S4 and S5 is involved in control of translational fidelity.

The protein resides in the plastid. Its subcellular location is the chloroplast. Its function is as follows. One of the primary rRNA binding proteins, it binds directly to 16S rRNA where it nucleates assembly of the body of the 30S subunit. In terms of biological role, with S5 and S12 plays an important role in translational accuracy. The chain is Small ribosomal subunit protein uS4c (rps4) from Woodwardia radicans (Rooting chainfern).